A 456-amino-acid chain; its full sequence is Myricetin 3-O-rhamnosyltransferase UGT77B2 (456 aa).

Residue histidine 19 is the Proton acceptor of the active site. Histidine 19 contacts an anthocyanidin. Residue aspartate 116 is the Charge relay of the active site. Histidine 147 is an an anthocyanidin binding site. Threonine 279, alanine 334, histidine 351, asparagine 355, and glutamate 359 together coordinate UDP-beta-L-rhamnose. Alanine 374 is a binding site for an anthocyanidin.

It belongs to the UDP-glycosyltransferase family. In terms of tissue distribution, expressed in young cromes.

It catalyses the reaction myricetin + UDP-beta-L-rhamnose = myricetin 3-O-alpha-L-rhamnoside + UDP + H(+). The protein operates within flavonoid metabolism. Functionally, rhamnosyltransferase involved in montbretin A (MbA) biosynthesis. Catalyzes the 3-O rhamnosylation of myricetin to produce myricetin 3-O-alpha-L-rhamnoside (MR), a precursor of MbA. MbA is a potent inhibitor of human pancreatic alpha-amylase and is being developed as drug candidate to treat type-2 diabetes. In vitro, is able to transfer UDP-glucose and UDP-xylose with 50-fold less efficiency compared with UDP-rhamnose. In vitro, can use kaempferol or quercetin as substrates, although these two flavonols may not be physiological substrates in vivo. This chain is Myricetin 3-O-rhamnosyltransferase UGT77B2, found in Crocosmia x crocosmiiflora (Montbretia).